We begin with the raw amino-acid sequence, 549 residues long: Glucose-6-phosphate isomerase (549 aa).

Catalysis depends on glutamate 355, which acts as the Proton donor. Active-site residues include histidine 386 and lysine 514.

It belongs to the GPI family.

The protein resides in the cytoplasm. The enzyme catalyses alpha-D-glucose 6-phosphate = beta-D-fructose 6-phosphate. The protein operates within carbohydrate biosynthesis; gluconeogenesis. It participates in carbohydrate degradation; glycolysis; D-glyceraldehyde 3-phosphate and glycerone phosphate from D-glucose: step 2/4. In terms of biological role, catalyzes the reversible isomerization of glucose-6-phosphate to fructose-6-phosphate. The chain is Glucose-6-phosphate isomerase from Edwardsiella ictaluri (strain 93-146).